The primary structure comprises 359 residues: Aminomethyltransferase (359 aa).

Belongs to the GcvT family. The glycine cleavage system is composed of four proteins: P, T, L and H.

The catalysed reaction is N(6)-[(R)-S(8)-aminomethyldihydrolipoyl]-L-lysyl-[protein] + (6S)-5,6,7,8-tetrahydrofolate = N(6)-[(R)-dihydrolipoyl]-L-lysyl-[protein] + (6R)-5,10-methylene-5,6,7,8-tetrahydrofolate + NH4(+). Functionally, the glycine cleavage system catalyzes the degradation of glycine. The chain is Aminomethyltransferase from Alcanivorax borkumensis (strain ATCC 700651 / DSM 11573 / NCIMB 13689 / SK2).